We begin with the raw amino-acid sequence, 382 residues long: Trophoblast glycoprotein-like (382 aa).

The N-terminal stretch at 1–26 (MAPRAGQPGLQGLLLVAAALSQPAAP) is a signal peptide. Disulfide bonds link cysteine 27-cysteine 33 and cysteine 31-cysteine 43. Residues 27–307 (CPFQCYCFGG…EAAGPELEAS (281 aa)) are Extracellular-facing. LRR repeat units follow at residues 57 to 80 (PPDA…AFAG), 93 to 116 (LPLL…AFDG), 117 to 140 (LPSL…AFRG), 171 to 194 (LAEL…ALRL), and 196 to 217 (RLEQ…ELRA). N-linked (GlcNAc...) asparagine glycosylation occurs at asparagine 62. Cystine bridges form between cysteine 238–cysteine 264 and cysteine 240–cysteine 285. Residues 308 to 328 (YVFFGLVLALIGLIFLMVLYL) traverse the membrane as a helical segment. Topologically, residues 329–382 (NRRGIQRWMRNLREACRDQMEGYHYRYEQDADPRRAPAPAAPAGSRATSPGSGL) are cytoplasmic. The disordered stretch occupies residues 358 to 382 (DADPRRAPAPAAPAGSRATSPGSGL). Residues 365–382 (PAPAAPAGSRATSPGSGL) show a composition bias toward low complexity.

The protein resides in the membrane. This chain is Trophoblast glycoprotein-like (TPBGL), found in Homo sapiens (Human).